The following is a 213-amino-acid chain: Imidazole glycerol phosphate synthase subunit HisH (213 aa).

A Glutamine amidotransferase type-1 domain is found at 4–213 (SIAIVDYGMG…LYRNFVHWNP (210 aa)). The active-site Nucleophile is cysteine 83. Active-site residues include histidine 193 and glutamate 195.

As to quaternary structure, heterodimer of HisH and HisF.

The protein localises to the cytoplasm. The enzyme catalyses 5-[(5-phospho-1-deoxy-D-ribulos-1-ylimino)methylamino]-1-(5-phospho-beta-D-ribosyl)imidazole-4-carboxamide + L-glutamine = D-erythro-1-(imidazol-4-yl)glycerol 3-phosphate + 5-amino-1-(5-phospho-beta-D-ribosyl)imidazole-4-carboxamide + L-glutamate + H(+). The catalysed reaction is L-glutamine + H2O = L-glutamate + NH4(+). It participates in amino-acid biosynthesis; L-histidine biosynthesis; L-histidine from 5-phospho-alpha-D-ribose 1-diphosphate: step 5/9. IGPS catalyzes the conversion of PRFAR and glutamine to IGP, AICAR and glutamate. The HisH subunit catalyzes the hydrolysis of glutamine to glutamate and ammonia as part of the synthesis of IGP and AICAR. The resulting ammonia molecule is channeled to the active site of HisF. The protein is Imidazole glycerol phosphate synthase subunit HisH of Burkholderia pseudomallei (strain K96243).